Consider the following 294-residue polypeptide: tRNA dimethylallyltransferase (294 aa).

10 to 17 provides a ligand contact to ATP; it reads GPTAVGKT. 12-17 serves as a coordination point for substrate; that stretch reads TAVGKT. Residues 35–38 are interaction with substrate tRNA; the sequence is DSQQ.

It belongs to the IPP transferase family. In terms of assembly, monomer. Mg(2+) serves as cofactor.

It catalyses the reaction adenosine(37) in tRNA + dimethylallyl diphosphate = N(6)-dimethylallyladenosine(37) in tRNA + diphosphate. In terms of biological role, catalyzes the transfer of a dimethylallyl group onto the adenine at position 37 in tRNAs that read codons beginning with uridine, leading to the formation of N6-(dimethylallyl)adenosine (i(6)A). This is tRNA dimethylallyltransferase from Streptococcus sanguinis (strain SK36).